We begin with the raw amino-acid sequence, 426 residues long: Histidine--tRNA ligase (426 aa).

This sequence belongs to the class-II aminoacyl-tRNA synthetase family. Homodimer.

Its subcellular location is the cytoplasm. The catalysed reaction is tRNA(His) + L-histidine + ATP = L-histidyl-tRNA(His) + AMP + diphosphate + H(+). In Shewanella baltica (strain OS223), this protein is Histidine--tRNA ligase.